Here is a 214-residue protein sequence, read N- to C-terminus: Large ribosomal subunit protein uL1 (214 aa).

It belongs to the universal ribosomal protein uL1 family. In terms of assembly, part of the 50S ribosomal subunit.

Functionally, binds directly to 23S rRNA. Probably involved in E site tRNA release. Protein L1 is also a translational repressor protein, it controls the translation of its operon by binding to its mRNA. In Methanoregula boonei (strain DSM 21154 / JCM 14090 / 6A8), this protein is Large ribosomal subunit protein uL1.